We begin with the raw amino-acid sequence, 146 residues long: MGRFIFMSFGLLVVFLSLSGTGADCPSDWSSYEGHCYRVFQQEMTWEAAEQFCAQQRKESHLVSFHSSEEVDFLVSITYPILKADLVWIGLRDIWNECRLEWTDGTKVDYKEWSEEPECIVSKTTDNQWISRPCSRTYSFVCKFQA.

The signal sequence occupies residues 1–23 (MGRFIFMSFGLLVVFLSLSGTGA). Intrachain disulfides connect Cys25/Cys36, Cys53/Cys142, and Cys119/Cys134. The 112-residue stretch at 32-143 (YEGHCYRVFQ…CSRTYSFVCK (112 aa)) folds into the C-type lectin domain.

Belongs to the snaclec family. As to quaternary structure, heterodimer; disulfide-linked. As to expression, expressed by the venom gland.

The protein resides in the secreted. Functionally, interferes with one step of hemostasis (modulation of platelet aggregation, or coagulation cascade, for example). The sequence is that of Snaclec 1 from Sistrurus catenatus edwardsii (Desert massasauga).